The primary structure comprises 437 residues: MSMFLDTAKISVQAGRGGDGMVAFRREKYVPNGGPWGGDGGKGGSVIFRVDEGLRTLMDFRYNRKFKAKSGEKGMTKGMHGRGAEDLIVFVPQGTTVRDAETGKVITDLVEHGQEVVIAKGGRGGRGNIRFATPRNPAPEIAENGEPGEERQLELELKILADVGLVGFPSVGKSTLLSVVSSAKPKIGAYHFTTIVPNLGMVRTKSGDSFAMADLPGLIEGASQGVGLGTQFLRHIERTRVILHVIDMSASEGRDPYEDYVSINNELETYNLRLMERPQIIVANKMDMPEAQENLKAFKKKLAAQYDEFDDLPMIFPISSLAHQGLDNLLEATAELLAKTDEFLLYDEADLVDEEAYYGFAETEKNFEIIRDDDATWVLSGEKLERLFVMTNMERDESIMKFARQLRGMGVDEALRERGAKDGDLVRIGKFEFEFVD.

The Obg domain maps to 2–160 (SMFLDTAKIS…RQLELELKIL (159 aa)). The region spanning 161–338 (ADVGLVGFPS…LLEATAELLA (178 aa)) is the OBG-type G domain. GTP-binding positions include 167–174 (GFPSVGKS), 192–196 (FTTIV), 214–217 (DLPG), 284–287 (NKMD), and 319–321 (SSL). Mg(2+) contacts are provided by Ser-174 and Thr-194. Residues 359 to 437 (GFAETEKNFE…IGKFEFEFVD (79 aa)) enclose the OCT domain.

Belongs to the TRAFAC class OBG-HflX-like GTPase superfamily. OBG GTPase family. In terms of assembly, monomer. Mg(2+) serves as cofactor.

The protein localises to the cytoplasm. Its function is as follows. An essential GTPase which binds GTP, GDP and possibly (p)ppGpp with moderate affinity, with high nucleotide exchange rates and a fairly low GTP hydrolysis rate. Plays a role in control of the cell cycle, stress response, ribosome biogenesis and in those bacteria that undergo differentiation, in morphogenesis control. This Streptococcus pyogenes serotype M49 (strain NZ131) protein is GTPase Obg.